We begin with the raw amino-acid sequence, 323 residues long: Transcription factor MYB56 (323 aa).

Residues 1 to 14 show a composition bias toward basic and acidic residues; sequence MNPNLLEKDLRGKE. A disordered region spans residues 1-84; it reads MNPNLLEKDL…EKSLRMRGKS (84 aa). Residues 27 to 60 show a composition bias toward polar residues; the sequence is NFRSLPNSHTAACKTSLNNPSISRNHPHNKSASV. Over residues 66–78 the composition is skewed to basic and acidic residues; it reads EHGNERGENEKSL. 2 consecutive HTH myb-type domains span residues 88–139 and 140–194; these read TKVC…FNQL and DPRI…ARRT. 2 consecutive DNA-binding regions (H-T-H motif) follow at residues 116–138 and 167–190; these read WNLISNHLLGRSGKSCRLRWFNQ and WALISRLFPGRTDNAVKNHWHVIM. A disordered region spans residues 192 to 217; sequence RRTRESQRQRQQPPPTLSRDAEMTVS.

In terms of assembly, forms homodimer. Interacts with the dephosphorylated active form of BES1 in the nucleus of quiescent center (QC) cells. Interacts with BPM1, BPM2, BPM3, BPM4, BPM5 and BPM6 at the promoter of FLOWERING LOCUS T (FT). In terms of tissue distribution, mostly expressed in flowers (at protein level) and siliques, and, to a lower extent, in roots, stems and leaves. Expressed in embryos (e.g. heart and torpedo stages) and cotyledons, and, at low levels, in roots and inflorescence. Accumulates specifically in root apical meristem quiescent center (QC) and vascular initial cells.

It is found in the nucleus. The protein localises to the cytoplasm. Its subcellular location is the cytosol. In terms of biological role, acts as a cell-specific local repressor of quiescent center (QC) self-renewal by cell divisions in the primary root. Counteracts brassinosteroid (BR)-mediated cell division in the QC cells. Regulates maternally seed size, especially before the heart stage, promoting both endothelial cells expansion and cell number in the outer integument layer of the seed coat. Modulates the expression of genes involved in cell wall metabolism such as cell division and expansion. Negative regulator of flowering via the repression of FT transcription. This Arabidopsis thaliana (Mouse-ear cress) protein is Transcription factor MYB56.